Consider the following 584-residue polypeptide: MGAKSVTASSSKKIKNRHNGKVKKSKKIKKVRKPQKSISLNDENEVEILPSRNEQETNKLPKDHVTADGILVLEHKSDDDEGFDVYDGHFDNPTDIPSTTEESKTPSLAVHGDEKDLANNDDFISLSASSEDEQAEQEEEREKQELEIKKEKQKEILNTDYPWILNHDHSKQKEISDWLTFEIKDFVAYISPSREEIEIRNQTISTIREAVKQLWPDADLHVFGSYSTDLYLPGSDIDCVVTSELGGKESRNNLYSLASHLKKKNLATEVEVVAKARVPIIKFVEPHSGIHIDVSFERTNGIEAAKLIREWLDDTPGLRELVLIVKQFLHARRLNNVHTGGLGGFSIICLVFSFLHMHPRIITNEIDPKDNLGVLLIEFFELYGKNFGYDDVALGSSDGYPVYFPKSTWSAIQPIKNPFSLAIQDPGDESNNISRGSFNIRDIKKAFAGAFDLLTNRCFELHSATFKDRLGKSILGNVIKYRGKARDFKDERGLVLNKAIIENENYHKKRSRIIHDEDFAEDTVTSTATATTTDDDYEITNPPAKKAKIEEKPESEPAKRNSGETYITVSSEDDDEDGYNPYTL.

The span at 1–11 shows a compositional bias: polar residues; sequence MGAKSVTASSS. Disordered stretches follow at residues 1–63 and 81–147; these read MGAK…LPKD and EGFD…QELE. A compositionally biased stretch (basic residues) spans 12 to 35; the sequence is KKIKNRHNGKVKKSKKIKKVRKPQ. Residues 53–63 are compositionally biased toward basic and acidic residues; sequence NEQETNKLPKD. The span at 130-139 shows a compositional bias: acidic residues; that stretch reads SEDEQAEQEE. The Mg(2+) site is built by D236 and D238. The ATP site is built by G301, K326, N431, and R435. Residues 371 to 431 form the PAP-associated domain; the sequence is NLGVLLIEFF…AIQDPGDESN (61 aa). Residues 525-584 are disordered; sequence TSTATATTTDDDYEITNPPAKKAKIEEKPESEPAKRNSGETYITVSSEDDDEDGYNPYTL. The span at 547 to 562 shows a compositional bias: basic and acidic residues; the sequence is AKIEEKPESEPAKRNS.

The protein belongs to the DNA polymerase type-B-like family. Component of the TRAMP complex (also called TRF4 complex) composed of at least HUL4, MTR4, PAP2/TRF4 and either AIR1 or AIR2. Interacts with NOP53 and POL2. Interacts directly with AIR2. Mg(2+) is required as a cofactor. It depends on Mn(2+) as a cofactor.

Its subcellular location is the nucleus. The catalysed reaction is RNA(n) + ATP = RNA(n)-3'-adenine ribonucleotide + diphosphate. Catalytic subunit of the TRAMP complex which has a poly(A) RNA polymerase activity and is involved in a post-transcriptional quality control mechanism limiting inappropriate expression of genetic information. Polyadenylation is required for the degradative activity of the exosome on several of its nuclear RNA substrates like cryptic transcripts generated by RNA polymerase II and III, or hypomethylated pre-tRNAi-Met. Polyadenylates RNA processing and degradation intermediates of snRNAs, snoRNAs and mRNAs that accumulate in strains lacking a functional exosome. TRF4 is also required for proper nuclear division in mitosis, DNA damage repair and sister chromatid cohesion. Involved in the regulation of histone mRNA levels. May mediate mitotic chromosome condensation. This chain is Poly(A) RNA polymerase protein 2 (PAP2), found in Saccharomyces cerevisiae (strain ATCC 204508 / S288c) (Baker's yeast).